Consider the following 496-residue polypeptide: GTPase Der (496 aa).

EngA-type G domains lie at 3 to 166 (PVIA…VGKF) and 209 to 382 (VKLA…TCAT). GTP contacts are provided by residues 9 to 16 (GRPNVGKS), 56 to 60 (DTGGI), 118 to 121 (NKTD), 215 to 222 (GRPNVGKS), 262 to 266 (DTAGV), and 327 to 330 (NKWD). Residues 383-467 (RRVGTSMLTR…PIRIQFKEGE (85 aa)) enclose the KH-like domain.

This sequence belongs to the TRAFAC class TrmE-Era-EngA-EngB-Septin-like GTPase superfamily. EngA (Der) GTPase family. In terms of assembly, associates with the 50S ribosomal subunit.

In terms of biological role, GTPase that plays an essential role in the late steps of ribosome biogenesis. The sequence is that of GTPase Der from Proteus mirabilis (strain HI4320).